We begin with the raw amino-acid sequence, 451 residues long: uncharacterized protein (451 aa).

Positions 2-60 (NLKVKQKIPLKIKRMGINGEGIGFYQKTLVFVPGALKGEDIYCQITSIRRNFVEAKLLK) constitute a TRAM domain. Residues cysteine 73, cysteine 79, cysteine 82, and cysteine 162 each coordinate [4Fe-4S] cluster. Glutamine 283, tyrosine 312, aspartate 333, and aspartate 381 together coordinate S-adenosyl-L-methionine. Cysteine 408 (nucleophile) is an active-site residue.

It belongs to the class I-like SAM-binding methyltransferase superfamily. RNA M5U methyltransferase family.

This is an uncharacterized protein from Streptococcus pneumoniae serotype 4 (strain ATCC BAA-334 / TIGR4).